The chain runs to 832 residues: G-type lectin S-receptor-like serine/threonine-protein kinase RLK1 (832 aa).

An N-terminal signal peptide occupies residues Met-1–Ser-24. At Gln-25–Lys-461 the chain is on the extracellular side. Asn-29, Asn-92, Asn-100, Asn-178, Asn-240, and Asn-251 each carry an N-linked (GlcNAc...) asparagine glycan. Residues Ser-37 to Trp-157 enclose the Bulb-type lectin domain. The 51-residue stretch at Arg-299–Leu-349 folds into the EGF-like; atypical domain. Disulfide bonds link Cys-303/Cys-320, Cys-314/Cys-330, and Cys-332/Cys-348. Residues Cys-357–Asn-446 form the PAN domain. An N-linked (GlcNAc...) asparagine glycan is attached at Asn-361. Intrachain disulfides connect Cys-397–Cys-420 and Cys-401–Cys-407. Asn-446 carries an N-linked (GlcNAc...) asparagine glycan. A helical membrane pass occupies residues Leu-462–Asp-482. Residues Thr-483 to Val-832 lie on the Cytoplasmic side of the membrane. The 273-residue stretch at Arg-531 to Ile-803 folds into the Protein kinase domain. ATP contacts are provided by residues Leu-537–Val-545 and Lys-563. The interval Arg-622–Ile-638 is caM-binding. The active-site Proton acceptor is Asp-657.

This sequence belongs to the protein kinase superfamily. Ser/Thr protein kinase family.

The protein resides in the cell membrane. It carries out the reaction L-seryl-[protein] + ATP = O-phospho-L-seryl-[protein] + ADP + H(+). The catalysed reaction is L-threonyl-[protein] + ATP = O-phospho-L-threonyl-[protein] + ADP + H(+). The polypeptide is G-type lectin S-receptor-like serine/threonine-protein kinase RLK1 (RLK1) (Arabidopsis thaliana (Mouse-ear cress)).